We begin with the raw amino-acid sequence, 202 residues long: Protein GrpE 1 (202 aa).

It belongs to the GrpE family. As to quaternary structure, homodimer.

Its subcellular location is the cytoplasm. In terms of biological role, participates actively in the response to hyperosmotic and heat shock by preventing the aggregation of stress-denatured proteins, in association with DnaK and GrpE. It is the nucleotide exchange factor for DnaK and may function as a thermosensor. Unfolded proteins bind initially to DnaJ; upon interaction with the DnaJ-bound protein, DnaK hydrolyzes its bound ATP, resulting in the formation of a stable complex. GrpE releases ADP from DnaK; ATP binding to DnaK triggers the release of the substrate protein, thus completing the reaction cycle. Several rounds of ATP-dependent interactions between DnaJ, DnaK and GrpE are required for fully efficient folding. In Buchnera aphidicola subsp. Schizaphis graminum (strain Sg), this protein is Protein GrpE 1.